The following is a 399-amino-acid chain: MSQCVPNCHIDDTPAAATTTVRSTTAADIPILDYEVAELTWENGQLGLHGLGPPRVTASSTKYSTGAGGTLESIVDQATRLPNPKPTDELVPWFHHRSSRAAMAMDALVPCSNLVHEQQSKPGGVGSTRVGSCSDGRTMGGGKRARVAPEWSGGGSQRLTMDTYDVGFTSTSMGSHDNTIDDHDSVCHSRPQMEDEEEKKAGGKSSVSTKRSRAAAIHNQSERKRRDKINQRMKTLQKLVPNSSKTDKASMLDEVIEYLKQLQAQVSMMSRMNMPSMMLPMAMQQQQQLQMSLMSNPMGLGMGMGMPGLGLLDLNSMNRAAASAPNIHANMMPNPFLPMNCPSWDASSNDSRFQSPLIPDPMSAFLACSTQPTTMEAYSRMATLYQQMQQQLPPPSNPK.

Disordered regions lie at residues 119–158 (QSKP…GSQR) and 173–228 (MGSH…RRDK). Positions 178 to 201 (NTIDDHDSVCHSRPQMEDEEEKKA) are enriched in basic and acidic residues. The 50-residue stretch at 213–262 (RAAAIHNQSERKRRDKINQRMKTLQKLVPNSSKTDKASMLDEVIEYLKQL) folds into the bHLH domain.

As to quaternary structure, homodimer. Associates to PTAC12/HMR/PAP5 which acts as a transcriptional coactivator. Interacts with the Pfr form of phyB but barely with that of phyA. Binds to COP1. Ubiquitinated and subsequently targeted to protein degradation by COP1 in the dark, but not in far-red light. As to expression, mainly expressed in stems, leaves, seedlings, fruits and flowers, and, to a lower extent, in roots.

It localises to the nucleus. Stabilized by phyA but destabilized by phyB. Accumulates in the dark but not in far-red light upon MG132 treatment, a 26S proteasome inhibitor (at protein level). Transcription factor binding to G-box elements (5'-CACGTG-3') in target genes promoters, particularly in far-red light but barely in the dark. Required during the fertilization of ovules by pollen. Repressor of phytochrome A-mediated far-red light responses including seed germination, suppression of hypocotyl elongation, and randomization of hypocotyl growth orientation. Does not inhibit phyB-induced red light responses. In Arabidopsis thaliana (Mouse-ear cress), this protein is Transcription factor UNE10.